Here is an 82-residue protein sequence, read N- to C-terminus: DNA-directed RNA polymerase subunit Rpo5 (82 aa).

This sequence belongs to the archaeal Rpo5/eukaryotic RPB5 RNA polymerase subunit family. In terms of assembly, part of the RNA polymerase complex.

The protein localises to the cytoplasm. It catalyses the reaction RNA(n) + a ribonucleoside 5'-triphosphate = RNA(n+1) + diphosphate. In terms of biological role, DNA-dependent RNA polymerase (RNAP) catalyzes the transcription of DNA into RNA using the four ribonucleoside triphosphates as substrates. This Thermococcus kodakarensis (strain ATCC BAA-918 / JCM 12380 / KOD1) (Pyrococcus kodakaraensis (strain KOD1)) protein is DNA-directed RNA polymerase subunit Rpo5.